The following is a 477-amino-acid chain: Glycogen synthase (477 aa).

Residue lysine 15 participates in ADP-alpha-D-glucose binding.

This sequence belongs to the glycosyltransferase 1 family. Bacterial/plant glycogen synthase subfamily.

The catalysed reaction is [(1-&gt;4)-alpha-D-glucosyl](n) + ADP-alpha-D-glucose = [(1-&gt;4)-alpha-D-glucosyl](n+1) + ADP + H(+). Its pathway is glycan biosynthesis; glycogen biosynthesis. Functionally, synthesizes alpha-1,4-glucan chains using ADP-glucose. This Cronobacter sakazakii (strain ATCC BAA-894) (Enterobacter sakazakii) protein is Glycogen synthase.